The chain runs to 247 residues: Carboxy-S-adenosyl-L-methionine synthase (247 aa).

S-adenosyl-L-methionine-binding positions include Y38, 63-65, N131, and R198; that span reads GCS.

The protein belongs to the class I-like SAM-binding methyltransferase superfamily. Cx-SAM synthase family. Homodimer.

The enzyme catalyses prephenate + S-adenosyl-L-methionine = carboxy-S-adenosyl-L-methionine + 3-phenylpyruvate + H2O. Its function is as follows. Catalyzes the conversion of S-adenosyl-L-methionine (SAM) to carboxy-S-adenosyl-L-methionine (Cx-SAM). The sequence is that of Carboxy-S-adenosyl-L-methionine synthase from Desulforapulum autotrophicum (strain ATCC 43914 / DSM 3382 / VKM B-1955 / HRM2) (Desulfobacterium autotrophicum).